A 320-amino-acid chain; its full sequence is Endolytic peptidoglycan transglycosylase RlpA (320 aa).

Belongs to the RlpA family.

Lytic transglycosylase with a strong preference for naked glycan strands that lack stem peptides. This Rickettsia typhi (strain ATCC VR-144 / Wilmington) protein is Endolytic peptidoglycan transglycosylase RlpA.